Consider the following 193-residue polypeptide: 3-isopropylmalate dehydratase small subunit (193 aa).

It belongs to the LeuD family. LeuD type 1 subfamily. Heterodimer of LeuC and LeuD.

It catalyses the reaction (2R,3S)-3-isopropylmalate = (2S)-2-isopropylmalate. It functions in the pathway amino-acid biosynthesis; L-leucine biosynthesis; L-leucine from 3-methyl-2-oxobutanoate: step 2/4. Catalyzes the isomerization between 2-isopropylmalate and 3-isopropylmalate, via the formation of 2-isopropylmaleate. The protein is 3-isopropylmalate dehydratase small subunit of Bacillus cereus (strain AH820).